Here is a 287-residue protein sequence, read N- to C-terminus: Proteasome subunit alpha (287 aa).

Residues 241 to 287 form a disordered region; sequence GVVAGEEPHTAAHAPSVPQPGAPAGLGDPGAPDTGGTAGSGGEAPTT. Residues 262–275 show a composition bias toward low complexity; it reads APAGLGDPGAPDTG. A compositionally biased stretch (gly residues) spans 276–287; it reads GTAGSGGEAPTT.

This sequence belongs to the peptidase T1A family. In terms of assembly, the 20S proteasome core is composed of 14 alpha and 14 beta subunits that assemble into four stacked heptameric rings, resulting in a barrel-shaped structure. The two inner rings, each composed of seven catalytic beta subunits, are sandwiched by two outer rings, each composed of seven alpha subunits. The catalytic chamber with the active sites is on the inside of the barrel. Has a gated structure, the ends of the cylinder being occluded by the N-termini of the alpha-subunits. Is capped by the proteasome-associated ATPase, ARC.

Its subcellular location is the cytoplasm. It participates in protein degradation; proteasomal Pup-dependent pathway. Its activity is regulated as follows. The formation of the proteasomal ATPase ARC-20S proteasome complex, likely via the docking of the C-termini of ARC into the intersubunit pockets in the alpha-rings, may trigger opening of the gate for substrate entry. Interconversion between the open-gate and close-gate conformations leads to a dynamic regulation of the 20S proteasome proteolysis activity. Functionally, component of the proteasome core, a large protease complex with broad specificity involved in protein degradation. In Geodermatophilus obscurus (strain ATCC 25078 / DSM 43160 / JCM 3152 / CCUG 61914 / KCC A-0152 / KCTC 9177 / NBRC 13315 / NRRL B-3577 / G-20), this protein is Proteasome subunit alpha.